We begin with the raw amino-acid sequence, 361 residues long: uncharacterized protein (361 aa).

The N-terminal stretch at 1-17 is a signal peptide; the sequence is MNLFIYVLLLSIWTSSC. Topologically, residues 18 to 47 are extracellular; that stretch reads LDRNESNGSATAVTTHAEFKQTKLQELRRR. N24 carries N-linked (GlcNAc...) asparagine glycosylation. Residues 48-68 form a helical membrane-spanning segment; that stretch reads LLIIVIGTLITGYMVSCTCLL. Residues 69-361 are Cytoplasmic-facing; that stretch reads HYSCDSEEAH…EDIYKNSRNN (293 aa). The segment covering 95 to 106 has biased composition (polar residues); it reads SSKISFTDSKSP. A disordered region spans residues 95 to 197; that stretch reads SSKISFTDSK…SQVSPSYPEK (103 aa). Over residues 144–158 the composition is skewed to low complexity; sequence PSSQKKPSKPSAPKK. Residues 169 to 185 are compositionally biased toward basic residues; that stretch reads HRTRSPKKAHRQAHAHK.

The protein resides in the membrane. This is an uncharacterized protein from Bos taurus (Bovine).